The following is a 296-amino-acid chain: Phosphatidylserine decarboxylase proenzyme (296 aa).

Active-site charge relay system; for autoendoproteolytic cleavage activity residues include aspartate 113, histidine 169, and serine 256. Residue serine 256 is the Schiff-base intermediate with substrate; via pyruvic acid; for decarboxylase activity of the active site. Pyruvic acid (Ser); by autocatalysis is present on serine 256.

Belongs to the phosphatidylserine decarboxylase family. PSD-B subfamily. Prokaryotic type II sub-subfamily. Heterodimer of a large membrane-associated beta subunit and a small pyruvoyl-containing alpha subunit. Pyruvate is required as a cofactor. Post-translationally, is synthesized initially as an inactive proenzyme. Formation of the active enzyme involves a self-maturation process in which the active site pyruvoyl group is generated from an internal serine residue via an autocatalytic post-translational modification. Two non-identical subunits are generated from the proenzyme in this reaction, and the pyruvate is formed at the N-terminus of the alpha chain, which is derived from the carboxyl end of the proenzyme. The autoendoproteolytic cleavage occurs by a canonical serine protease mechanism, in which the side chain hydroxyl group of the serine supplies its oxygen atom to form the C-terminus of the beta chain, while the remainder of the serine residue undergoes an oxidative deamination to produce ammonia and the pyruvoyl prosthetic group on the alpha chain. During this reaction, the Ser that is part of the protease active site of the proenzyme becomes the pyruvoyl prosthetic group, which constitutes an essential element of the active site of the mature decarboxylase.

Its subcellular location is the cell membrane. The catalysed reaction is a 1,2-diacyl-sn-glycero-3-phospho-L-serine + H(+) = a 1,2-diacyl-sn-glycero-3-phosphoethanolamine + CO2. Its pathway is phospholipid metabolism; phosphatidylethanolamine biosynthesis; phosphatidylethanolamine from CDP-diacylglycerol: step 2/2. Catalyzes the formation of phosphatidylethanolamine (PtdEtn) from phosphatidylserine (PtdSer). The sequence is that of Phosphatidylserine decarboxylase proenzyme from Clostridium kluyveri (strain ATCC 8527 / DSM 555 / NBRC 12016 / NCIMB 10680 / K1).